A 341-amino-acid polypeptide reads, in one-letter code: Anthranilate phosphoribosyltransferase (341 aa).

5-phospho-alpha-D-ribose 1-diphosphate contacts are provided by residues glycine 83, 86 to 87, threonine 91, 93 to 96, 111 to 119, and serine 123; these read GD, NIST, and KHGNRGVSS. Glycine 83 contributes to the anthranilate binding site. Position 95 (serine 95) interacts with Mg(2+). Asparagine 114 is an anthranilate binding site. Arginine 169 serves as a coordination point for anthranilate. The Mg(2+) site is built by aspartate 228 and glutamate 229.

This sequence belongs to the anthranilate phosphoribosyltransferase family. As to quaternary structure, homodimer. The cofactor is Mg(2+).

It catalyses the reaction N-(5-phospho-beta-D-ribosyl)anthranilate + diphosphate = 5-phospho-alpha-D-ribose 1-diphosphate + anthranilate. It participates in amino-acid biosynthesis; L-tryptophan biosynthesis; L-tryptophan from chorismate: step 2/5. In terms of biological role, catalyzes the transfer of the phosphoribosyl group of 5-phosphorylribose-1-pyrophosphate (PRPP) to anthranilate to yield N-(5'-phosphoribosyl)-anthranilate (PRA). The polypeptide is Anthranilate phosphoribosyltransferase (Cupriavidus necator (strain ATCC 17699 / DSM 428 / KCTC 22496 / NCIMB 10442 / H16 / Stanier 337) (Ralstonia eutropha)).